Consider the following 132-residue polypeptide: Small ribosomal subunit protein uS8 (132 aa).

It belongs to the universal ribosomal protein uS8 family. As to quaternary structure, part of the 30S ribosomal subunit. Contacts proteins S5 and S12.

In terms of biological role, one of the primary rRNA binding proteins, it binds directly to 16S rRNA central domain where it helps coordinate assembly of the platform of the 30S subunit. This is Small ribosomal subunit protein uS8 from Clostridium acetobutylicum (strain ATCC 824 / DSM 792 / JCM 1419 / IAM 19013 / LMG 5710 / NBRC 13948 / NRRL B-527 / VKM B-1787 / 2291 / W).